The following is a 162-amino-acid chain: Protein A49 (162 aa).

It belongs to the poxviridae A49 protein family.

The sequence is that of Protein A49 from Homo sapiens (Human).